The following is a 328-amino-acid chain: GTP 3',8-cyclase (328 aa).

The Radical SAM core domain maps to 1–229; the sequence is MNTVDYLRIS…ESFVPGNGPA (229 aa). Position 8 (arginine 8) interacts with GTP. Residues cysteine 15 and cysteine 19 each coordinate [4Fe-4S] cluster. Tyrosine 21 contributes to the S-adenosyl-L-methionine binding site. Cysteine 22 serves as a coordination point for [4Fe-4S] cluster. GTP is bound at residue arginine 60. Glycine 64 provides a ligand contact to S-adenosyl-L-methionine. Threonine 91 contacts GTP. Serine 115 contacts S-adenosyl-L-methionine. Lysine 155 provides a ligand contact to GTP. Methionine 189 contributes to the S-adenosyl-L-methionine binding site. [4Fe-4S] cluster is bound by residues cysteine 252 and cysteine 255. 257 to 259 contributes to the GTP binding site; it reads RMR. Residue cysteine 269 participates in [4Fe-4S] cluster binding.

This sequence belongs to the radical SAM superfamily. MoaA family. In terms of assembly, monomer and homodimer. Requires [4Fe-4S] cluster as cofactor.

The enzyme catalyses GTP + AH2 + S-adenosyl-L-methionine = (8S)-3',8-cyclo-7,8-dihydroguanosine 5'-triphosphate + 5'-deoxyadenosine + L-methionine + A + H(+). Its pathway is cofactor biosynthesis; molybdopterin biosynthesis. In terms of biological role, catalyzes the cyclization of GTP to (8S)-3',8-cyclo-7,8-dihydroguanosine 5'-triphosphate. This Trichodesmium erythraeum (strain IMS101) protein is GTP 3',8-cyclase.